The following is a 511-amino-acid chain: Ribonuclease Y (511 aa).

A helical membrane pass occupies residues 2 to 22; the sequence is ITTVIIAIVCFAVGGGLSYML. Residues 201-261 form the KH domain; the sequence is SVTVFHIESD…VRREIARLAL (61 aa). An HD domain is found at 327–420; it reads LLQHARETAN…VQVCDAISGA (94 aa).

Belongs to the RNase Y family.

The protein localises to the cell membrane. Functionally, endoribonuclease that initiates mRNA decay. The protein is Ribonuclease Y of Phocaeicola vulgatus (strain ATCC 8482 / DSM 1447 / JCM 5826 / CCUG 4940 / NBRC 14291 / NCTC 11154) (Bacteroides vulgatus).